The following is a 1806-amino-acid chain: Focadhesin (1806 aa).

A disordered region spans residues A733–S760.

The protein localises to the cell junction. Its subcellular location is the focal adhesion. It localises to the cytoplasm. The protein resides in the cytosol. Required for the maintenance of SKIC2 and SKIC3 proteostatic levels in the liver. May be involved in the regulation of RNA degradation by the exosome complex. This Danio rerio (Zebrafish) protein is Focadhesin (focad).